The sequence spans 692 residues: Hexamerin-1.1 (692 aa).

The N-terminal stretch at 1–18 is a signal peptide; that stretch reads MKLLILAVAISLAVLASG. A glycan (N-linked (GlcNAc...) asparagine) is linked at Asn203.

The protein belongs to the hemocyanin family. As to quaternary structure, homohexamer. As to expression, larval fat body.

Its subcellular location is the secreted. It is found in the extracellular space. Its function is as follows. Larval storage protein (LSP) which may serve as a store of amino acids for synthesis of adult proteins. The chain is Hexamerin-1.1 (HexA) from Anopheles gambiae (African malaria mosquito).